Consider the following 409-residue polypeptide: Killer cell lectin-like receptor subfamily G member 2 (409 aa).

Residues 1–120 (MEESWEAAPG…GAEPAPSAWA (120 aa)) form a disordered region. The span at 41-53 (PEGPESSPSPAGA) shows a compositional bias: low complexity. Over residues 72-81 (SPRPGSPRVP) the composition is skewed to pro residues. A compositionally biased stretch (low complexity) spans 104–120 (PRNGEAPGAEPAPSAWA). Ser158 is subject to Phosphoserine. The disordered stretch occupies residues 193-216 (TESGCDAEGRASPAEGSAGSPGSP). The segment covering 202 to 216 (RASPAEGSAGSPGSP) has biased composition (low complexity). The chain crosses the membrane as a helical span at residues 263 to 283 (WALAFMAVLLAVSGVVIVVLA). The 106-residue stretch at 300-405 (SEEHCYYFSA…CSTPRPWVCA (106 aa)) folds into the C-type lectin domain. 2 disulfide bridges follow: Cys321–Cys404 and Cys383–Cys396.

The protein localises to the membrane. This is Killer cell lectin-like receptor subfamily G member 2 (KLRG2) from Homo sapiens (Human).